A 152-amino-acid chain; its full sequence is MMEYKKIIAQNKKALFNYFIEERLEAGIVLKGSEVQSLRQGKASIEESHAADTGNEVFLYNCHIAEYEKANRFNHSTRRPRKLLLHKKEINKIIGRTKIKGYTLVALSMYFNKKNKIKIELGIAKGKKLHDKRESIKEKDWKRDQSRLIRQK.

This sequence belongs to the SmpB family.

The protein resides in the cytoplasm. Functionally, required for rescue of stalled ribosomes mediated by trans-translation. Binds to transfer-messenger RNA (tmRNA), required for stable association of tmRNA with ribosomes. tmRNA and SmpB together mimic tRNA shape, replacing the anticodon stem-loop with SmpB. tmRNA is encoded by the ssrA gene; the 2 termini fold to resemble tRNA(Ala) and it encodes a 'tag peptide', a short internal open reading frame. During trans-translation Ala-aminoacylated tmRNA acts like a tRNA, entering the A-site of stalled ribosomes, displacing the stalled mRNA. The ribosome then switches to translate the ORF on the tmRNA; the nascent peptide is terminated with the 'tag peptide' encoded by the tmRNA and targeted for degradation. The ribosome is freed to recommence translation, which seems to be the essential function of trans-translation. The chain is SsrA-binding protein from Rickettsia bellii (strain RML369-C).